The primary structure comprises 597 residues: NADH-quinone oxidoreductase subunit C/D (597 aa).

The NADH dehydrogenase I subunit C stretch occupies residues 1-188 (MKKEIKRDDV…DPYVLNKYKE (188 aa)). Residues 211–597 (KYMFLNLGPN…IDFVMSDVDR (387 aa)) form an NADH dehydrogenase I subunit D region.

The protein in the N-terminal section; belongs to the complex I 30 kDa subunit family. This sequence in the C-terminal section; belongs to the complex I 49 kDa subunit family. NDH-1 is composed of 13 different subunits. Subunits NuoB, CD, E, F, and G constitute the peripheral sector of the complex.

Its subcellular location is the cell inner membrane. The catalysed reaction is a quinone + NADH + 5 H(+)(in) = a quinol + NAD(+) + 4 H(+)(out). Functionally, NDH-1 shuttles electrons from NADH, via FMN and iron-sulfur (Fe-S) centers, to quinones in the respiratory chain. The immediate electron acceptor for the enzyme in this species is believed to be ubiquinone. Couples the redox reaction to proton translocation (for every two electrons transferred, four hydrogen ions are translocated across the cytoplasmic membrane), and thus conserves the redox energy in a proton gradient. This chain is NADH-quinone oxidoreductase subunit C/D, found in Buchnera aphidicola subsp. Baizongia pistaciae (strain Bp).